A 313-amino-acid polypeptide reads, in one-letter code: Phosphoenolpyruvate phosphomutase (313 aa).

Residues 1 to 23 are disordered; that stretch reads MNATERPGSDGTGSPESVGSRLK. The active-site Nucleophile is Asp69.

This sequence belongs to the isocitrate lyase/PEP mutase superfamily. PEP mutase family.

It carries out the reaction phosphoenolpyruvate + H(+) = 3-phosphonopyruvate. It participates in secondary metabolite biosynthesis; bialaphos biosynthesis. Formation of a carbon-phosphorus bond by converting phosphoenolpyruvate (PEP) to phosphonopyruvate (P-Pyr). The chain is Phosphoenolpyruvate phosphomutase (ppm) from Streptomyces viridochromogenes (strain DSM 40736 / JCM 4977 / BCRC 1201 / Tue 494).